The chain runs to 292 residues: Ribosomal protein L11 methyltransferase (292 aa).

S-adenosyl-L-methionine-binding residues include threonine 144, glycine 165, aspartate 187, and asparagine 229.

It belongs to the methyltransferase superfamily. PrmA family.

It localises to the cytoplasm. It carries out the reaction L-lysyl-[protein] + 3 S-adenosyl-L-methionine = N(6),N(6),N(6)-trimethyl-L-lysyl-[protein] + 3 S-adenosyl-L-homocysteine + 3 H(+). Functionally, methylates ribosomal protein L11. The chain is Ribosomal protein L11 methyltransferase from Pseudomonas savastanoi pv. phaseolicola (strain 1448A / Race 6) (Pseudomonas syringae pv. phaseolicola (strain 1448A / Race 6)).